The primary structure comprises 133 residues: Small ribosomal subunit protein uS11 (133 aa).

The protein belongs to the universal ribosomal protein uS11 family. In terms of assembly, part of the 30S ribosomal subunit. Interacts with proteins S7 and S18. Binds to IF-3.

In terms of biological role, located on the platform of the 30S subunit, it bridges several disparate RNA helices of the 16S rRNA. Forms part of the Shine-Dalgarno cleft in the 70S ribosome. The protein is Small ribosomal subunit protein uS11 of Methylibium petroleiphilum (strain ATCC BAA-1232 / LMG 22953 / PM1).